Reading from the N-terminus, the 386-residue chain is MNNHHQQLNPQFDPTSHDDFLEQMLSTLPSFWDPNSDLSAETTPDNVAAFPFDEHSTLNSKFRNHQITSPTTKAAAALMLQQHLLQMPANDVVDPTNFFKSPNPGGEASASVQALYNGFTGSLNGTQPQQHFQHPPQGNSNQIQGQNFGATNQAPPASGSAGGGGNQGQAKPRVRARRGQATDPHSIAERLRRERIAERMKALQELVPNANKTDKASMLDEIIDYVKFLQLQVKVLSMSRLGGAAAVAPLVADISSEGGGGGGGGDCVTNGAGGVLPRSTTTAASTTNDSLTMTEHQVAKLMEEDMGSAMQYLQGKGLCLMPISLATAISTATCHTRSPLIPNNLANLAAAAASNGEGPSSPNMSVLTVQSAVAGNDSTVKDVSKP.

The interval 119-186 is disordered; the sequence is FTGSLNGTQP…RRGQATDPHS (68 aa). The segment covering 127–137 has biased composition (low complexity); it reads QPQQHFQHPPQ. Positions 138 to 151 are enriched in polar residues; the sequence is GNSNQIQGQNFGAT. A basic motif; degenerate region spans residues 180–193; sequence QATDPHSIAERLRR. The 50-residue stretch at 180–229 folds into the bHLH domain; that stretch reads QATDPHSIAERLRRERIAERMKALQELVPNANKTDKASMLDEIIDYVKFL. Residues 194–229 are helix-loop-helix motif; it reads ERIAERMKALQELVPNANKTDKASMLDEIIDYVKFL.

As to expression, expressed in root epidermal cells.

The protein resides in the nucleus. Functionally, transcription factor that regulates the development of root hairs. The sequence is that of bHLH transcription factor RHL1 from Lotus japonicus (Lotus corniculatus var. japonicus).